We begin with the raw amino-acid sequence, 240 residues long: Ribonuclease P protein component 3 (240 aa).

It belongs to the eukaryotic/archaeal RNase P protein component 3 family. Consists of a catalytic RNA component and at least 4-5 protein subunits.

The protein resides in the cytoplasm. It carries out the reaction Endonucleolytic cleavage of RNA, removing 5'-extranucleotides from tRNA precursor.. Functionally, part of ribonuclease P, a protein complex that generates mature tRNA molecules by cleaving their 5'-ends. The chain is Ribonuclease P protein component 3 from Halorubrum lacusprofundi (strain ATCC 49239 / DSM 5036 / JCM 8891 / ACAM 34).